The following is a 213-amino-acid chain: Probable nicotinate-nucleotide adenylyltransferase (213 aa).

It belongs to the NadD family.

It catalyses the reaction nicotinate beta-D-ribonucleotide + ATP + H(+) = deamido-NAD(+) + diphosphate. Its pathway is cofactor biosynthesis; NAD(+) biosynthesis; deamido-NAD(+) from nicotinate D-ribonucleotide: step 1/1. Its function is as follows. Catalyzes the reversible adenylation of nicotinate mononucleotide (NaMN) to nicotinic acid adenine dinucleotide (NaAD). The sequence is that of Probable nicotinate-nucleotide adenylyltransferase from Shigella boydii serotype 18 (strain CDC 3083-94 / BS512).